A 322-amino-acid chain; its full sequence is MMLGITELTYTALIAFLIVIIIGPIFIPMLRKFKFGQTVRDDGPQTHLAKNGTPTMGGIIMIVAILITGLTRVKVSHDMAVGLICIAGFGFIGFLDDFIKIKLKRSLGLKAYQKIILQVALSFYVAFYQYTSSSSASQLMIPFTDFVINVGILYIPIMMFIIVAIVNAVNLTDGLDGLASGVTLIVSVFFMLFASSIAGNTEVAVLAAATVGACLGFLGFNSYPARVFMGDTGSMALGGAVVAFSVLTNSVLIIPIIGGIYFAEALSVLIQVGYFKATRKRFFKMAPIHHHFEQCGWPETRVVFIFWIITVVLAWISIIAVF.

A run of 10 helical transmembrane segments spans residues 10–30, 51–71, 79–99, 107–127, 146–166, 178–198, 203–223, 227–247, 250–270, and 302–322; these read YTAL…IPML, NGTP…TGLT, MAVG…DDFI, LGLK…YVAF, FVIN…VAIV, LASG…SSIA, VAVL…FNSY, VFMG…FSVL, SVLI…SVLI, and VVFI…IAVF.

The protein belongs to the glycosyltransferase 4 family. MraY subfamily. The cofactor is Mg(2+).

It is found in the cell membrane. The enzyme catalyses UDP-N-acetyl-alpha-D-muramoyl-L-alanyl-gamma-D-glutamyl-meso-2,6-diaminopimeloyl-D-alanyl-D-alanine + di-trans,octa-cis-undecaprenyl phosphate = di-trans,octa-cis-undecaprenyl diphospho-N-acetyl-alpha-D-muramoyl-L-alanyl-D-glutamyl-meso-2,6-diaminopimeloyl-D-alanyl-D-alanine + UMP. It participates in cell wall biogenesis; peptidoglycan biosynthesis. Its function is as follows. Catalyzes the initial step of the lipid cycle reactions in the biosynthesis of the cell wall peptidoglycan: transfers peptidoglycan precursor phospho-MurNAc-pentapeptide from UDP-MurNAc-pentapeptide onto the lipid carrier undecaprenyl phosphate, yielding undecaprenyl-pyrophosphoryl-MurNAc-pentapeptide, known as lipid I. The protein is Phospho-N-acetylmuramoyl-pentapeptide-transferase of Clostridioides difficile (strain 630) (Peptoclostridium difficile).